We begin with the raw amino-acid sequence, 156 residues long: Small ribosomal subunit protein uS17A (156 aa).

Serine 2 bears the N-acetylserine mark. Residues lysine 15, lysine 46, lysine 56, lysine 57, lysine 79, lysine 96, lysine 105, lysine 133, lysine 141, and lysine 148 each participate in a glycyl lysine isopeptide (Lys-Gly) (interchain with G-Cter in ubiquitin) cross-link.

This sequence belongs to the universal ribosomal protein uS17 family. Component of the small ribosomal subunit (SSU). Mature yeast ribosomes consist of a small (40S) and a large (60S) subunit. The 40S small subunit contains 1 molecule of ribosomal RNA (18S rRNA) and 33 different proteins (encoded by 57 genes). The large 60S subunit contains 3 rRNA molecules (25S, 5.8S and 5S rRNA) and 46 different proteins (encoded by 81 genes). Post-translationally, N-terminally acetylated by acetyltransferase NatA.

The protein localises to the cytoplasm. Functionally, component of the ribosome, a large ribonucleoprotein complex responsible for the synthesis of proteins in the cell. The small ribosomal subunit (SSU) binds messenger RNAs (mRNAs) and translates the encoded message by selecting cognate aminoacyl-transfer RNA (tRNA) molecules. The large subunit (LSU) contains the ribosomal catalytic site termed the peptidyl transferase center (PTC), which catalyzes the formation of peptide bonds, thereby polymerizing the amino acids delivered by tRNAs into a polypeptide chain. The nascent polypeptides leave the ribosome through a tunnel in the LSU and interact with protein factors that function in enzymatic processing, targeting, and the membrane insertion of nascent chains at the exit of the ribosomal tunnel. The sequence is that of Small ribosomal subunit protein uS17A from Saccharomyces cerevisiae (strain ATCC 204508 / S288c) (Baker's yeast).